The sequence spans 73 residues: Translation initiation factor IF-1 (73 aa).

The region spanning 1–73 (MAKKDGAIEI…TRGRIVYRYK (73 aa)) is the S1-like domain.

This sequence belongs to the IF-1 family. In terms of assembly, component of the 30S ribosomal translation pre-initiation complex which assembles on the 30S ribosome in the order IF-2 and IF-3, IF-1 and N-formylmethionyl-tRNA(fMet); mRNA recruitment can occur at any time during PIC assembly.

It localises to the cytoplasm. Its function is as follows. One of the essential components for the initiation of protein synthesis. Stabilizes the binding of IF-2 and IF-3 on the 30S subunit to which N-formylmethionyl-tRNA(fMet) subsequently binds. Helps modulate mRNA selection, yielding the 30S pre-initiation complex (PIC). Upon addition of the 50S ribosomal subunit IF-1, IF-2 and IF-3 are released leaving the mature 70S translation initiation complex. The chain is Translation initiation factor IF-1 from Thermobifida fusca (strain YX).